The following is a 323-amino-acid chain: Thioredoxin reductase (323 aa).

42-49 (YRAEADGA) serves as a coordination point for FAD. A disulfide bond links cysteine 143 and cysteine 146. 286 to 295 (DVLCNEVKQA) contacts FAD.

It belongs to the class-II pyridine nucleotide-disulfide oxidoreductase family. As to quaternary structure, homodimer. Requires FAD as cofactor.

It is found in the cytoplasm. The enzyme catalyses [thioredoxin]-dithiol + NADP(+) = [thioredoxin]-disulfide + NADPH + H(+). The protein is Thioredoxin reductase (trxB) of Aquifex aeolicus (strain VF5).